A 364-amino-acid polypeptide reads, in one-letter code: Chorismate synthase (364 aa).

The disordered stretch occupies residues 41–60 (MQHDLDRRRPGTSRYTTARR). Arg-48 and Arg-54 together coordinate NADP(+). FMN is bound by residues 125-127 (RSS), 238-239 (NA), Gly-278, 293-297 (KPTSS), and Arg-319.

It belongs to the chorismate synthase family. Homotetramer. The cofactor is FMNH2.

The enzyme catalyses 5-O-(1-carboxyvinyl)-3-phosphoshikimate = chorismate + phosphate. Its pathway is metabolic intermediate biosynthesis; chorismate biosynthesis; chorismate from D-erythrose 4-phosphate and phosphoenolpyruvate: step 7/7. In terms of biological role, catalyzes the anti-1,4-elimination of the C-3 phosphate and the C-6 proR hydrogen from 5-enolpyruvylshikimate-3-phosphate (EPSP) to yield chorismate, which is the branch point compound that serves as the starting substrate for the three terminal pathways of aromatic amino acid biosynthesis. This reaction introduces a second double bond into the aromatic ring system. In Shewanella sp. (strain MR-4), this protein is Chorismate synthase.